Consider the following 325-residue polypeptide: MEKKRIYTYNSPWVIYGLSWSSRVNRPFRLAIGSFLEDYTNRVDVIQLNEETDQFEVVCGFEHPYPPTKCMWIPDKNSNRPDLLATTGDYLRLWEVGSNQRSIKLKSLLTNVISEFCAPLSSFDWNETDPSLLATSSIDTTCTIWNIETGQAKTQLIAHDKEVFDIAFARGTDLFASVGADGSLRMFDLRNLEHSTIIYETPSFVPLLRLCWNKQDPNYLATIQQDSPKVIILDIRVPSVPAAELVFHKSAVNGISWAPHSSCHICTVSDDKQALIWDLSSMPKPIEDPLLTYNALAEINQLSWSSSQPDWIAIAFSSHLQILKV.

WD repeat units follow at residues 62 to 104 (EHPY…RSIK), 115 to 155 (EFCA…AKTQ), 158 to 197 (AHDK…HSTI), and 247 to 287 (FHKS…KPIE).

This sequence belongs to the WD repeat DCAF7 family.

The protein is DDB1- and CUL4-associated factor 7 homolog (wdr68) of Dictyostelium discoideum (Social amoeba).